The primary structure comprises 562 residues: MNINVASLLNGNYILLLFVVLALGLCLGKVRLGSVQLGNSIGVLVVSLLLGQQHFAINTEALNLGFMLFIFCVGVEAGPNFFSIFFRDGKNYLMLALVMVGSAMVIAIGLGKLFHWDIGLTAGMLAGSMTSTPVLVGAGDTLRNTITNGPALLAAQDHLSLGYALTYLIGLVSLIFGARYLPKLQHQDLSTSAQQIARERGLDTDSQRKVYLPVIRAYRVGPELVAWADGKNLRELGIYRQTGCYIERIRRNGILANPDGDAVLQVGDEISLVGYPDAHARLDPSFRNGKEVFDRDLLDMRIVTEEIVVKNSNAVNKRLSQLKLTDHGCFLNRVIRSQIEMPIDDSIVLNKGDVLQVSGDARRVKSVAEKIGFISIHSQVTDLLAFCAFFIIGLLIGQITIQFSNFSFGIGNAAGLLMAGIMLGFLRANHPTFGYIPQGALNMVKEFGLMVFMAGVGLSAGAGIGNSLGAVGGQMLIAGLIVSLVPVVICFLFGAYVLRMNRALLFGAIMGARTCAPAMEIISDTARSNIPALGYAGTYAIANVLLTLAGSLIVVLWPGILG.

5 helical membrane-spanning segments follow: residues 8–28 (LLNGNYILLLFVVLALGLCLG), 37–57 (LGNSIGVLVVSLLLGQQHFAI), 66–86 (FMLFIFCVGVEAGPNFFSIFF), 94–114 (MLALVMVGSAMVIAIGLGKLF), and 158–178 (HLSLGYALTYLIGLVSLIFGA). 2 RCK C-terminal domains span residues 202-288 (LDTD…SFRN) and 290-373 (KEVF…KIGF). 5 consecutive transmembrane segments (helical) span residues 383-403 (LLAFCAFFIIGLLIGQITIQF), 406-426 (FSFGIGNAAGLLMAGIMLGFL), 447-467 (FGLMVFMAGVGLSAGAGIGNS), 475-495 (MLIAGLIVSLVPVVICFLFGA), and 541-561 (IANVLLTLAGSLIVVLWPGIL).

It belongs to the AAE transporter (TC 2.A.81) family. YbjL subfamily.

The protein resides in the cell membrane. This chain is Putative transport protein Spro_1639, found in Serratia proteamaculans (strain 568).